Consider the following 241-residue polypeptide: Small ribosomal subunit protein uS3 (241 aa).

Positions 39 to 107 (IREVLMKNLK…EVVINIVEVR (69 aa)) constitute a KH type-2 domain. Residues 219–241 (MAELDHAGGGGGGERRRRERDAA) form a disordered region. Residues 231–241 (GERRRRERDAA) are compositionally biased toward basic and acidic residues.

The protein belongs to the universal ribosomal protein uS3 family. As to quaternary structure, part of the 30S ribosomal subunit. Forms a tight complex with proteins S10 and S14.

In terms of biological role, binds the lower part of the 30S subunit head. Binds mRNA in the 70S ribosome, positioning it for translation. This is Small ribosomal subunit protein uS3 from Beijerinckia indica subsp. indica (strain ATCC 9039 / DSM 1715 / NCIMB 8712).